A 609-amino-acid chain; its full sequence is Proteasome-associated ATPase (609 aa).

The tract at residues 1-25 (MADSERSEAFGTPDDTPLSSNDAAE) is disordered. Residues 19–96 (SSNDAAELEQ…LREEVDRLGQ (78 aa)) are a coiled coil. ATP is bound at residue 296-301 (GCGKTL). The tract at residues 608–609 (YL) is docks into pockets in the proteasome alpha-ring.

It belongs to the AAA ATPase family. In terms of assembly, homohexamer. Assembles into a hexameric ring structure that caps the 20S proteasome core. Strongly interacts with the prokaryotic ubiquitin-like protein Pup through a hydrophobic interface; the interacting region of ARC lies in its N-terminal coiled-coil domain. There is one Pup binding site per ARC hexamer ring. Upon ATP-binding, the C-terminus of ARC interacts with the alpha-rings of the proteasome core, possibly by binding to the intersubunit pockets.

It functions in the pathway protein degradation; proteasomal Pup-dependent pathway. In terms of biological role, ATPase which is responsible for recognizing, binding, unfolding and translocation of pupylated proteins into the bacterial 20S proteasome core particle. May be essential for opening the gate of the 20S proteasome via an interaction with its C-terminus, thereby allowing substrate entry and access to the site of proteolysis. Thus, the C-termini of the proteasomal ATPase may function like a 'key in a lock' to induce gate opening and therefore regulate proteolysis. This is Proteasome-associated ATPase from Mycobacterium marinum (strain ATCC BAA-535 / M).